The chain runs to 318 residues: Aspartate carbamoyltransferase catalytic subunit (318 aa).

Residues R58 and T59 each coordinate carbamoyl phosphate. K86 is a binding site for L-aspartate. R108, H141, and Q144 together coordinate carbamoyl phosphate. L-aspartate is bound by residues R174 and R226. 2 residues coordinate carbamoyl phosphate: G270 and P271.

It belongs to the aspartate/ornithine carbamoyltransferase superfamily. ATCase family. As to quaternary structure, heterododecamer (2C3:3R2) of six catalytic PyrB chains organized as two trimers (C3), and six regulatory PyrI chains organized as three dimers (R2).

It catalyses the reaction carbamoyl phosphate + L-aspartate = N-carbamoyl-L-aspartate + phosphate + H(+). Its pathway is pyrimidine metabolism; UMP biosynthesis via de novo pathway; (S)-dihydroorotate from bicarbonate: step 2/3. Functionally, catalyzes the condensation of carbamoyl phosphate and aspartate to form carbamoyl aspartate and inorganic phosphate, the committed step in the de novo pyrimidine nucleotide biosynthesis pathway. The polypeptide is Aspartate carbamoyltransferase catalytic subunit (Lactobacillus acidophilus (strain ATCC 700396 / NCK56 / N2 / NCFM)).